The primary structure comprises 499 residues: Glycerol kinase (499 aa).

T13 contacts ADP. 3 residues coordinate ATP: T13, T14, and S15. Residue T13 participates in sn-glycerol 3-phosphate binding. R17 is an ADP binding site. Residues R83, E84, Y135, and D244 each contribute to the sn-glycerol 3-phosphate site. Residues R83, E84, Y135, D244, and Q245 each coordinate glycerol. ADP is bound by residues T266 and G309. Positions 266, 309, 313, and 410 each coordinate ATP. ADP is bound by residues G410 and N414.

This sequence belongs to the FGGY kinase family.

The catalysed reaction is glycerol + ATP = sn-glycerol 3-phosphate + ADP + H(+). Its pathway is polyol metabolism; glycerol degradation via glycerol kinase pathway; sn-glycerol 3-phosphate from glycerol: step 1/1. Inhibited by fructose 1,6-bisphosphate (FBP). Key enzyme in the regulation of glycerol uptake and metabolism. Catalyzes the phosphorylation of glycerol to yield sn-glycerol 3-phosphate. This chain is Glycerol kinase, found in Paraburkholderia phytofirmans (strain DSM 17436 / LMG 22146 / PsJN) (Burkholderia phytofirmans).